A 298-amino-acid chain; its full sequence is MESANTLCPGRKCKGGVLAHLERLEAQTNISNRKSEEPAVRKKESSLRTKIRELRQQRDKLRAEVKQWGARVKEPPAKEDPSRTVISEQEVLEREWRNVDAILEAYRFTGLSGKLTSRGVCMCISTAFEGNLLDSYFVDLVIEKPLRIHHHSVPVFIPLEKIAAAHLQTDVQRFLFRLWEYLNAYAGRKYQADQLESDFCDVLTGPLQRNALCNLLSFTYKVEQRCQTFSFSARLLYEDPTAALPTNVTVTRPGVEASSPPWEEHRASHQMLFRTKPLHKVFASFSKETEKLHLNLVS.

Residues 29 to 49 (NISNRKSEEPAVRKKESSLRT) are disordered. Residues 33-49 (RKSEEPAVRKKESSLRT) show a composition bias toward basic and acidic residues. Ser-35 carries the phosphoserine modification. Residues 39-74 (AVRKKESSLRTKIRELRQQRDKLRAEVKQWGARVKE) adopt a coiled-coil conformation.

The protein belongs to the CENP-O/MCM21 family. Component of the CENPA-CAD complex, composed of CENPI, CENPK, CENPL, CENPO, CENPP, CENPQ, CENPR and CENPS. The CENPA-CAD complex interacts with the CENPA-NAC complex, at least composed of CENPA, CENPC, CENPH, CENPM, CENPN, CENPT and CENPU.

Its subcellular location is the nucleus. It is found in the chromosome. It localises to the centromere. The protein localises to the kinetochore. Functionally, component of the CENPA-CAD (nucleosome distal) complex, a complex recruited to centromeres which is involved in assembly of kinetochore proteins, mitotic progression and chromosome segregation. May be involved in incorporation of newly synthesized CENPA into centromeres via its interaction with the CENPA-NAC complex. Modulates the kinetochore-bound levels of NDC80 complex. This is Centromere protein O (Cenpo) from Mus musculus (Mouse).